We begin with the raw amino-acid sequence, 276 residues long: Small ribosomal subunit protein uS5w (276 aa).

Positions 1-15 are enriched in basic and acidic residues; that stretch reads MAERGVERGGDRGDF. A disordered region spans residues 1–42; that stretch reads MAERGVERGGDRGDFGRGFGGRGGGRGGPRGRGRRAGRAPEE. Over residues 16–28 the composition is skewed to gly residues; sequence GRGFGGRGGGRGG. Residues 87–150 form the S5 DRBM domain; the sequence is LKDEVMKIMP…ILAKLSVVPI (64 aa).

It belongs to the universal ribosomal protein uS5 family.

The polypeptide is Small ribosomal subunit protein uS5w (RPS2D) (Arabidopsis thaliana (Mouse-ear cress)).